We begin with the raw amino-acid sequence, 378 residues long: GTP 3',8-cyclase 3 (378 aa).

A Radical SAM core domain is found at 40–259 (RCGRTMGDLR…STLGKKYGPI (220 aa)). Position 49 (arginine 49) interacts with GTP. [4Fe-4S] cluster contacts are provided by cysteine 56 and cysteine 60. Residue tyrosine 62 coordinates S-adenosyl-L-methionine. Residue cysteine 63 participates in [4Fe-4S] cluster binding. Arginine 99 serves as a coordination point for GTP. Glycine 103 lines the S-adenosyl-L-methionine pocket. Threonine 134 is a GTP binding site. Residue serine 158 participates in S-adenosyl-L-methionine binding. Lysine 195 serves as a coordination point for GTP. Methionine 229 contacts S-adenosyl-L-methionine. Residues cysteine 292 and cysteine 295 each contribute to the [4Fe-4S] cluster site. A GTP-binding site is contributed by 297 to 299 (RSR). Residue cysteine 309 participates in [4Fe-4S] cluster binding.

This sequence belongs to the radical SAM superfamily. MoaA family. Monomer and homodimer. [4Fe-4S] cluster is required as a cofactor.

It carries out the reaction GTP + AH2 + S-adenosyl-L-methionine = (8S)-3',8-cyclo-7,8-dihydroguanosine 5'-triphosphate + 5'-deoxyadenosine + L-methionine + A + H(+). It functions in the pathway cofactor biosynthesis; molybdopterin biosynthesis. Catalyzes the cyclization of GTP to (8S)-3',8-cyclo-7,8-dihydroguanosine 5'-triphosphate. This is GTP 3',8-cyclase 3 from Mycobacterium bovis (strain ATCC BAA-935 / AF2122/97).